The following is an 882-amino-acid chain: Bifunctional heparan sulfate N-deacetylase/N-sulfotransferase 1 (882 aa).

At 1–17 (MPALACLRRLCRHVSPQ) the chain is on the cytoplasmic side. The interval 1 to 169 (MPALACLRRL…VAYGVGIIGF (169 aa)) is sufficient for localization to Golgi membrane. A helical; Signal-anchor for type II membrane protein membrane pass occupies residues 18 to 39 (AVLFLLFIFCLFSVFISAYYLY). The segment at 40-598 (GWKRGLEPSA…KRHKDIWSKE (559 aa)) is heparan sulfate N-deacetylase 1. Residues 40–882 (GWKRGLEPSA…WLREDLQNTR (843 aa)) are Lumenal-facing. N-linked (GlcNAc...) asparagine glycans are attached at residues Asn231, Asn351, and Asn401. A heparan sulfate N-sulfotransferase 1 region spans residues 599 to 882 (KTCDRFPKLL…WLREDLQNTR (284 aa)). The For sulfotransferase activity role is filled by Lys614. An adenosine 3',5'-bisphosphate-binding site is contributed by 614-618 (KTGTT). N-linked (GlcNAc...) asparagine glycosylation occurs at Asn667. Adenosine 3',5'-bisphosphate contacts are provided by Ser712 and Trp817. Cys818 and Cys828 are disulfide-bonded. 833 to 837 (KGRKY) is a binding site for adenosine 3',5'-bisphosphate.

It belongs to the sulfotransferase 1 family. NDST subfamily. In terms of assembly, monomer. Interacts with heparan sulfate co-polymerase subunits EXT1 and EXT2. Interacts with NDST1 isoform 3. As to quaternary structure, interacts with heparan sulfate co-polymerase subunits EXT1 and EXT2. Interacts with NDST1 isoform 1. In terms of tissue distribution, widely expressed. Expression is most abundant in heart, liver and pancreas.

The protein resides in the golgi apparatus. The protein localises to the trans-Golgi network membrane. It localises to the cis-Golgi network membrane. The catalysed reaction is N-acetyl-alpha-D-glucosaminyl-[heparan sulfate](n) + H2O = alpha-D-glucosaminyl-[heparan sulfate](n) + acetate. It catalyses the reaction alpha-D-glucosaminyl-[heparan sulfate](n) + 3'-phosphoadenylyl sulfate = N-sulfo-alpha-D-glucosaminyl-[heparan sulfate](n) + adenosine 3',5'-bisphosphate + 2 H(+). The protein operates within glycan metabolism; heparan sulfate biosynthesis. Its pathway is glycan metabolism; heparin biosynthesis. Functionally, essential bifunctional enzyme that catalyzes both the N-deacetylation and the N-sulfation of glucosamine (GlcNAc) of the glycosaminoglycan in heparan sulfate. Modifies the GlcNAc-GlcA disaccharide repeating sugar backbone to make N-sulfated heparosan, a prerequisite substrate for later modifications in heparin biosynthesis. Plays a role in determining the extent and pattern of sulfation of heparan sulfate. Participates in biosynthesis of heparan sulfate that can ultimately serve as L-selectin ligands, thereby playing a role in inflammatory response. Required for the exosomal release of SDCBP, CD63 and syndecan. In terms of biological role, lacks both N-deacetylase and N-sulfotransferase activities. Acts as a dominant negative on isoform 1, likely by changing the composition of enzyme complexes responsible for elongation and modification of heparan sulfates. This Homo sapiens (Human) protein is Bifunctional heparan sulfate N-deacetylase/N-sulfotransferase 1.